The sequence spans 1400 residues: ABC transporter G family member 30 (1400 aa).

N-linked (GlcNAc...) asparagine glycosylation is present at Asn116. The region spanning 141–414 is the ABC transporter 1 domain; the sequence is LLSEFICSKK…FEEFGFKCPE (274 aa). Residue 174 to 181 coordinates ATP; sequence GPPGCGKT. The N-linked (GlcNAc...) asparagine glycan is linked to Asn472. An ABC transmembrane type-2 1 domain is found at 492 to 704; sequence EMLKACSRRE…AEIGLTANEF (213 aa). The next 7 helical transmembrane spans lie at 510-530, 553-573, 582-602, 628-648, 652-672, 679-699, and 738-758; these read FIYLFKSALLVFNALVTMTVF, LFRLLADGLPELTLTISRLGV, FYPAWAYAIPSIILKIPLSVL, FLILSTFNLSCVSMFRAIAAI, IIASTITGAISILVLSLFGGF, MPAWLGWGFWLSPLSYAEIGL, and TAFGALVGFVLFFNALYVLAL. The 246-residue stretch at 808–1053 folds into the ABC transporter 2 domain; that stretch reads VTFQNVQYYI…VIEYFESFSG (246 aa). 845-852 contributes to the ATP binding site; it reads GVSGAGKT. N-linked (GlcNAc...) asparagine glycosylation is found at Asn899 and Asn1040. Positions 1125 to 1339 constitute an ABC transmembrane type-2 2 domain; sequence VQLKACLWKQ…VLEGLLSSQY (215 aa). Helical transmembrane passes span 1144–1164, 1179–1199, 1228–1248, 1263–1283, 1289–1309, 1317–1337, and 1372–1392; these read HNITRIVFILLDSTLCGLLFW, IFGSMYTLVVFPGMNNCAAVI, VLIEVPYSLLQSLLCTIIVYP, LYSIFCSLLIFNYSGMLMVAL, MAVTLRSSFFSMLNLFAGFVI, WWIWMYYLSPTSWVLEGLLSS, and VVAFVLIAYPIIVATLFAFFM.

Belongs to the ABC transporter superfamily. ABCG family. PDR (TC 3.A.1.205) subfamily. As to expression, confined to roots. In seeds, mainly expressed in the embryo and, to a lesser extent, in the endosperm.

The protein localises to the cell membrane. It carries out the reaction abscisate(out) + ATP + H2O = abscisate(in) + ADP + phosphate + H(+). Its function is as follows. Together with ABCG40, import into the embryo the abscisic acid (ABA) delivered from the endosperm via ABCG25 and ABCG31-mediated export to suppress radicle extension and subsequent embryonic growth. Involved in root secretion of phytochemicals (phenolics and sugars) which regulate soil microbiota, influencing both fungal and bacterial communities. May be a general defense protein. The polypeptide is ABC transporter G family member 30 (Arabidopsis thaliana (Mouse-ear cress)).